Consider the following 426-residue polypeptide: 3-phosphoshikimate 1-carboxyvinyltransferase (426 aa).

Residues lysine 23, serine 24, and arginine 28 each coordinate 3-phosphoshikimate. Lysine 23 contacts phosphoenolpyruvate. Phosphoenolpyruvate-binding residues include glycine 96 and arginine 124. 6 residues coordinate 3-phosphoshikimate: threonine 170, serine 171, glutamine 172, serine 198, aspartate 314, and lysine 341. Residue glutamine 172 participates in phosphoenolpyruvate binding. Aspartate 314 (proton acceptor) is an active-site residue. Phosphoenolpyruvate contacts are provided by arginine 345, arginine 386, and lysine 411.

This sequence belongs to the EPSP synthase family. In terms of assembly, monomer.

It localises to the cytoplasm. It carries out the reaction 3-phosphoshikimate + phosphoenolpyruvate = 5-O-(1-carboxyvinyl)-3-phosphoshikimate + phosphate. The protein operates within metabolic intermediate biosynthesis; chorismate biosynthesis; chorismate from D-erythrose 4-phosphate and phosphoenolpyruvate: step 6/7. Catalyzes the transfer of the enolpyruvyl moiety of phosphoenolpyruvate (PEP) to the 5-hydroxyl of shikimate-3-phosphate (S3P) to produce enolpyruvyl shikimate-3-phosphate and inorganic phosphate. The protein is 3-phosphoshikimate 1-carboxyvinyltransferase of Trichormus variabilis (strain ATCC 29413 / PCC 7937) (Anabaena variabilis).